The following is a 499-amino-acid chain: Cytochrome P450 81E8 (499 aa).

The chain crosses the membrane as a helical span at residues 3-23; it reads TFYLSLIISLFFLIITLKVFF. C436 serves as a coordination point for heme.

The protein belongs to the cytochrome P450 family. Heme serves as cofactor.

It localises to the membrane. Probable monooxygenases exhibiting no activity with isoflavones such as formononetin, biochanin A, pseudobaptigenin, daidzein, genistein, isoformononetin and prunetin, or with flavonoids including naringenin, liquiritigenin, apigenin, luteolin, or kaempferol. In Medicago truncatula (Barrel medic), this protein is Cytochrome P450 81E8.